We begin with the raw amino-acid sequence, 86 residues long: U2-sicaritoxin-Li1a (86 aa).

A signal peptide spans 1–20 (MTFKLFVVVTLVLAIYVATA). The propeptide occupies 21 to 33 (EEAMKDDSEPAER). Intrachain disulfides connect C35–C53, C42–C62, C52–C71, and C64–C69.

Belongs to the neurotoxin 39 family. Expressed by the venom gland.

The protein localises to the secreted. In terms of biological role, toxin active against S.frugiperda larvae. May act on sodium channels (Nav). This chain is U2-sicaritoxin-Li1a, found in Loxosceles intermedia (Brown spider).